The following is a 1264-amino-acid chain: uncharacterized protein (1264 aa).

Positions 1–18 are cleaved as a signal peptide; sequence MMRKYLILLILLPALAVG. The helical transmembrane segment at 1215–1235 threads the bilayer; it reads SYTVLGVVVITILTMSIILCL.

It localises to the host membrane. This is an uncharacterized protein from Ostreid herpesvirus 1 (isolate France) (OsHV-1).